We begin with the raw amino-acid sequence, 103 residues long: Large ribosomal subunit protein uL24 (103 aa).

This sequence belongs to the universal ribosomal protein uL24 family. Part of the 50S ribosomal subunit.

Functionally, one of two assembly initiator proteins, it binds directly to the 5'-end of the 23S rRNA, where it nucleates assembly of the 50S subunit. In terms of biological role, one of the proteins that surrounds the polypeptide exit tunnel on the outside of the subunit. The sequence is that of Large ribosomal subunit protein uL24 from Bacillus licheniformis (strain ATCC 14580 / DSM 13 / JCM 2505 / CCUG 7422 / NBRC 12200 / NCIMB 9375 / NCTC 10341 / NRRL NRS-1264 / Gibson 46).